Consider the following 427-residue polypeptide: Synaptotagmin-A (427 aa).

Over 1–57 the chain is Vesicular; it reads MKLTEAYHDALAALPATPPLPTAVANATEAAAGSEEGKQDGFSKVKVKEKFMNELNK. An N-linked (GlcNAc...) asparagine glycan is attached at Asn-26. A helical membrane pass occupies residues 58–84; sequence IPLPPWALVAIAIVAIILGLTCCFCIC. At 85–427 the chain is on the cytoplasmic side; the sequence is KKCLLKKKNK…EVDATLGMKK (343 aa). Positions 96–145 are disordered; it reads KGKEKGGKNAMTMKDVKEMGKSGKEQALKDEDEDAETGLTTDGKEEEKED. Residues 109-124 show a composition bias toward basic and acidic residues; the sequence is KDVKEMGKSGKEQALK. A phospholipid binding region spans residues 141 to 387; sequence EEKEDEKLGK…AIGKVFVGYN (247 aa). C2 domains lie at 147–266 and 278–411; these read KLGK…EEWR and KLGD…AQWH. The Ca(2+) site is built by Leu-177, Asp-178, Asp-184, Asp-236, Phe-237, Asp-238, Ser-241, Lys-242, Asp-244, Asp-309, Asp-315, Asp-369, Asp-371, and Asp-377.

The protein belongs to the synaptotagmin family. Homodimer or homotrimer (possible). Ca(2+) serves as cofactor. Forebrain, cerebellum and neuroendocrine cells.

The protein localises to the cytoplasmic vesicle. The protein resides in the secretory vesicle. It is found in the synaptic vesicle membrane. It localises to the synapse. May have a regulatory role in the membrane interactions during trafficking of synaptic vesicles at the active zone of the synapse. It binds acidic phospholipids with a specificity that requires the presence of both an acidic head group and a diacyl backbone. The protein is Synaptotagmin-A (P65-A) of Diplobatis ommata (Ocellated electric ray).